A 148-amino-acid chain; its full sequence is Large ribosomal subunit protein bL9 (148 aa).

This sequence belongs to the bacterial ribosomal protein bL9 family.

Binds to the 23S rRNA. This Desulfatibacillum aliphaticivorans protein is Large ribosomal subunit protein bL9.